The chain runs to 311 residues: Porphobilinogen deaminase (311 aa).

Position 243 is an S-(dipyrrolylmethanemethyl)cysteine (cysteine 243).

This sequence belongs to the HMBS family. Monomer. Requires dipyrromethane as cofactor.

The catalysed reaction is 4 porphobilinogen + H2O = hydroxymethylbilane + 4 NH4(+). The protein operates within porphyrin-containing compound metabolism; protoporphyrin-IX biosynthesis; coproporphyrinogen-III from 5-aminolevulinate: step 2/4. Tetrapolymerization of the monopyrrole PBG into the hydroxymethylbilane pre-uroporphyrinogen in several discrete steps. This is Porphobilinogen deaminase from Aliivibrio fischeri (strain ATCC 700601 / ES114) (Vibrio fischeri).